The primary structure comprises 348 residues: MSSPKPSLSYRDAGVDIDAGDALVDRIKPLAKRTMRPEVLGGIGGFGALFELSKKYREPVLVSGTDGVGTKLKLAFQLNRHDTVGQDLVAMSVNDILVQGAEPLFFLDYFACGKLDVDTAAAVVSGIARGCELSGCALIGGETAEMHGMYPDGEYDLAGFAVGAVEKSEIIDGSRIVPGDVVLGLASSGAHSNGYSLIRKIIDLAKPDLDADFHGRPLRDVILEPTRLYVKPMLGLMQAIPGVVKGMAHITGGGLLENVPRILADGLAARLDVSSWTLPPLFQWLRDAGNVDAQEMYRVFNCGVGMVVIVSAAQAGAAVQNLEAAGEIVYRLGRIESRAEGAAQTTVG.

It belongs to the AIR synthase family.

The protein resides in the cytoplasm. The enzyme catalyses 2-formamido-N(1)-(5-O-phospho-beta-D-ribosyl)acetamidine + ATP = 5-amino-1-(5-phospho-beta-D-ribosyl)imidazole + ADP + phosphate + H(+). Its pathway is purine metabolism; IMP biosynthesis via de novo pathway; 5-amino-1-(5-phospho-D-ribosyl)imidazole from N(2)-formyl-N(1)-(5-phospho-D-ribosyl)glycinamide: step 2/2. The polypeptide is Phosphoribosylformylglycinamidine cyclo-ligase (Aromatoleum aromaticum (strain DSM 19018 / LMG 30748 / EbN1) (Azoarcus sp. (strain EbN1))).